A 907-amino-acid chain; its full sequence is Clumping factor B (907 aa).

An N-terminal signal peptide occupies residues 1–44 (MKKRIDYLSNKQNKYSIRRFTVGTTSVIVGATILFGIGNHQAQA). A YSIRK-G/S signaling motif motif is present at residues 15–26 (YSIRRFTVGTTS). Composition is skewed to polar residues over residues 44-61 (ASEQ…NASA) and 68-101 (MIET…KPMS). Positions 44–191 (ASEQSNDTTQ…AQGTSKPSVR (148 aa)) are disordered. A ligand binding A region region spans residues 45 to 542 (SEQSNDTTQS…GSADGDSAVN (498 aa)). A compositionally biased stretch (low complexity) spans 102-119 (TQTSNTTTTEPASTNETP). The segment covering 134–189 (QDQTVPQEANSQVDNKTTNDANSIATNSELKNPQTLDLPQSSPQTISNAQGTSKPS) has biased composition (polar residues). The MIDAS-like motif motif lies at 272–276 (DYSNS). Residues 530 to 879 (YGGGSADGDS…ETGDKSENTN (350 aa)) are disordered. The span at 545–555 (DPTPGPPVDPE) shows a compositional bias: pro residues. Positions 556–831 (PSPDPEPEPS…SDSDSDSDSD (276 aa)) are enriched in acidic residues. The span at 835–846 (RVTPPNNEQKAP) shows a compositional bias: polar residues. Basic and acidic residues predominate over residues 863–876 (HKTDALPETGDKSE). The LPXTG sorting signal motif lies at 868–872 (LPETG). Residue Thr-871 is modified to Pentaglycyl murein peptidoglycan amidated threonine. A propeptide spans 872–907 (GDKSENTNATLFGAMMALLGSLLLFRKRKQDHKEKA) (removed by sortase).

The protein belongs to the serine-aspartate repeat-containing protein (SDr) family. In terms of processing, proteolytically cleaved by aureolysin (aur). This cleavage leads to the inactivation of ClfB.

The protein resides in the secreted. It localises to the cell wall. In terms of biological role, cell surface-associated protein implicated in virulence by promoting bacterial attachment to both alpha- and beta-chains of human fibrinogen and inducing the formation of bacterial clumps. The polypeptide is Clumping factor B (clfB) (Staphylococcus aureus (strain MW2)).